Consider the following 242-residue polypeptide: Biosynthetic peptidoglycan transglycosylase (242 aa).

The helical transmembrane segment at 12–32 threads the bilayer; sequence LLLWLIALSVLLVLLLRWVPP.

This sequence belongs to the glycosyltransferase 51 family.

It localises to the cell inner membrane. The enzyme catalyses [GlcNAc-(1-&gt;4)-Mur2Ac(oyl-L-Ala-gamma-D-Glu-L-Lys-D-Ala-D-Ala)](n)-di-trans,octa-cis-undecaprenyl diphosphate + beta-D-GlcNAc-(1-&gt;4)-Mur2Ac(oyl-L-Ala-gamma-D-Glu-L-Lys-D-Ala-D-Ala)-di-trans,octa-cis-undecaprenyl diphosphate = [GlcNAc-(1-&gt;4)-Mur2Ac(oyl-L-Ala-gamma-D-Glu-L-Lys-D-Ala-D-Ala)](n+1)-di-trans,octa-cis-undecaprenyl diphosphate + di-trans,octa-cis-undecaprenyl diphosphate + H(+). The protein operates within cell wall biogenesis; peptidoglycan biosynthesis. Its function is as follows. Peptidoglycan polymerase that catalyzes glycan chain elongation from lipid-linked precursors. This is Biosynthetic peptidoglycan transglycosylase from Stutzerimonas stutzeri (strain A1501) (Pseudomonas stutzeri).